Reading from the N-terminus, the 407-residue chain is Putative two-component response regulator ARR19 (407 aa).

A Response regulatory domain is found at 35 to 150 (NVLVVDTNFT…VMANIWQHIV (116 aa)). Position 86 is a 4-aspartylphosphate (D86). A Nuclear localization signal motif is present at residues 214–217 (RKPR). The segment at residues 217–271 (RMTWTEELHQKFLEAIEIIGGIEKANPKVLVECLQEMRIEGITRSNVASHLQKHR) is a DNA-binding region (myb-like GARP).

It belongs to the ARR family. Type-B subfamily. Binds the target DNA as a monomer. Two-component system major event consists of a His-to-Asp phosphorelay between a sensor histidine kinase (HK) and a response regulator (RR). In plants, the His-to-Asp phosphorelay involves an additional intermediate named Histidine-containing phosphotransfer protein (HPt). This multistep phosphorelay consists of a His-Asp-His-Asp sequential transfer of a phosphate group between first a His and an Asp of the HK protein, followed by the transfer to a conserved His of the HPt protein and finally the transfer to an Asp in the receiver domain of the RR protein. Detected in trichomes and siliques.

The protein resides in the nucleus. Functionally, putative transcriptional activator that binds specifically to the DNA sequence 5'-[AG]GATT-3'. Functions as a response regulator involved in His-to-Asp phosphorelay signal transduction system. Phosphorylation of the Asp residue in the receiver domain activates the ability of the protein to promote the transcription of target genes. Could directly activate some type-A response regulators in response to cytokinins. The protein is Putative two-component response regulator ARR19 (ARR19) of Arabidopsis thaliana (Mouse-ear cress).